We begin with the raw amino-acid sequence, 447 residues long: Na(+)-translocating NADH-quinone reductase subunit A (447 aa).

This sequence belongs to the NqrA family. Composed of six subunits; NqrA, NqrB, NqrC, NqrD, NqrE and NqrF.

It catalyses the reaction a ubiquinone + n Na(+)(in) + NADH + H(+) = a ubiquinol + n Na(+)(out) + NAD(+). NQR complex catalyzes the reduction of ubiquinone-1 to ubiquinol by two successive reactions, coupled with the transport of Na(+) ions from the cytoplasm to the periplasm. NqrA to NqrE are probably involved in the second step, the conversion of ubisemiquinone to ubiquinol. The sequence is that of Na(+)-translocating NADH-quinone reductase subunit A from Haemophilus influenzae (strain PittEE).